Here is a 153-residue protein sequence, read N- to C-terminus: Endoribonuclease YbeY (153 aa).

Positions 118, 122, and 128 each coordinate Zn(2+).

It belongs to the endoribonuclease YbeY family. Zn(2+) is required as a cofactor.

It is found in the cytoplasm. In terms of biological role, single strand-specific metallo-endoribonuclease involved in late-stage 70S ribosome quality control and in maturation of the 3' terminus of the 16S rRNA. The protein is Endoribonuclease YbeY of Staphylococcus saprophyticus subsp. saprophyticus (strain ATCC 15305 / DSM 20229 / NCIMB 8711 / NCTC 7292 / S-41).